A 458-amino-acid chain; its full sequence is uncharacterized protein (458 aa).

A run of 12 helical transmembrane segments spans residues 26–46 (LIAI…KSIH), 47–67 (FAGP…FLIM), 95–115 (AAFI…MADL), 125–145 (WLPG…LLIM), 160–180 (FALI…VMIF), 208–228 (GFIL…LVGL), 251–271 (VLLF…WDII), 278–298 (FVQV…NFVV), 342–362 (ALFF…IMPE), 365–385 (FTLI…ITVI), 409–429 (PFTN…LALA), and 432–452 (TRVS…IYKV).

The protein belongs to the amino acid-polyamine-organocation (APC) superfamily.

It is found in the cell membrane. Functionally, probable amino-acid or metabolite transport protein. This is an uncharacterized protein from Bacillus subtilis (strain 168).